Reading from the N-terminus, the 331-residue chain is tRNA N6-adenosine threonylcarbamoyltransferase (331 aa).

Positions 109, 113, and 130 each coordinate Fe cation. Substrate is bound by residues 130 to 134 (YLSGG), Asp162, Asp183, and Ser262. Asp290 is a Fe cation binding site.

It belongs to the KAE1 / TsaD family. Requires Fe(2+) as cofactor.

It localises to the cytoplasm. The enzyme catalyses L-threonylcarbamoyladenylate + adenosine(37) in tRNA = N(6)-L-threonylcarbamoyladenosine(37) in tRNA + AMP + H(+). Functionally, required for the formation of a threonylcarbamoyl group on adenosine at position 37 (t(6)A37) in tRNAs that read codons beginning with adenine. Is probably involved in the transfer of the threonylcarbamoyl moiety of threonylcarbamoyl-AMP (TC-AMP) to the N6 group of A37. This Saccharolobus islandicus (strain Y.G.57.14 / Yellowstone #1) (Sulfolobus islandicus) protein is tRNA N6-adenosine threonylcarbamoyltransferase.